The sequence spans 1101 residues: Protein diaphanous homolog 2 (1101 aa).

Position 1 is an N-acetylmethionine (Met-1). The interval 1-44 (MEQPGAAASGAGGGSEEPGGGRSNKRSAGNRAANEEETKNKPKL) is disordered. Residues 10–22 (GAGGGSEEPGGGR) show a composition bias toward gly residues. Residues 98-464 (SLNLSEKEVL…QIVLHCSGMD (367 aa)) form the GBD/FH3 domain. 2 coiled-coil regions span residues 366-418 (KEKE…MLKD) and 487-547 (KAKV…SSSG). Residues 536-546 (RTQAQVLSSSS) show a composition bias toward polar residues. 3 disordered regions span residues 536 to 594 (RTQA…PPPP), 1010 to 1048 (NKRR…DINK), and 1070 to 1101 (RDRR…ISSK). Residues 549-594 (PGPPAAPPLPGVGPPPPPPAPPLPGGAPLPPPPPPLPGMMGIPPPP) are compositionally biased toward pro residues. The FH1 domain occupies 549–623 (PGPPAAPPLP…PPPGISLNLP (75 aa)). In terms of domain architecture, FH2 spans 628–1028 (QKKMYKPEVS…TRRAKLAKEK (401 aa)). Residues 903-1053 (SASKVSAQIL…IDINKEGDET (151 aa)) are a coiled coil. Basic and acidic residues-rich tracts occupy residues 1010–1035 (NKRR…EKLE) and 1078–1090 (RNPD…LERS). The region spanning 1051–1081 (DETGVMDNLLEALQSGAAFRDRRKRIPRNPD) is the DAD domain.

Belongs to the formin homology family. Diaphanous subfamily. Isoform 3 interacts with RHOD in the GTP-bound form. As to expression, expressed in testis, ovary, small intestine, prostate, lung, liver, kidney and leukocytes.

It is found in the cytoplasm. The protein resides in the cytosol. The protein localises to the early endosome. Its function is as follows. Could be involved in oogenesis. Involved in the regulation of endosome dynamics. Implicated in a novel signal transduction pathway, in which isoform 3 and CSK are sequentially activated by RHOD to regulate the motility of early endosomes through interactions with the actin cytoskeleton. This is Protein diaphanous homolog 2 (DIAPH2) from Homo sapiens (Human).